We begin with the raw amino-acid sequence, 234 residues long: MFVMRCDFVSIFPEYFDVLDISLIGKARRNGLLDLRVHNLREYSEAGRVDSSPYGGGPGMVMSAEPWARAIEHIATGESLVVFPSPSGQPYSHDLAQSLSSEMHIVFCCGRYEGIDNRIYEWTATRLRSSGISIGDYVLNGGEIAALVILEGFVRFIPGVLGNPESLVEESYQYNLLEYPVYTKPAVWRGLEVPDILLSGNHDLIREWRYKKQLEITQKTRPDLYSTHIYETDS.

Residues Gly110 and 134–139 (IGDYVL) contribute to the S-adenosyl-L-methionine site.

Belongs to the RNA methyltransferase TrmD family. As to quaternary structure, homodimer.

It localises to the cytoplasm. It catalyses the reaction guanosine(37) in tRNA + S-adenosyl-L-methionine = N(1)-methylguanosine(37) in tRNA + S-adenosyl-L-homocysteine + H(+). Specifically methylates guanosine-37 in various tRNAs. In Tropheryma whipplei (strain TW08/27) (Whipple's bacillus), this protein is tRNA (guanine-N(1)-)-methyltransferase.